A 226-amino-acid chain; its full sequence is Imidazole glycerol phosphate synthase subunit HisH (226 aa).

The Glutamine amidotransferase type-1 domain maps to 6–214; that stretch reads NIALVDYGVG…VERAASRSAA (209 aa). Residue C84 is the Nucleophile of the active site. Active-site residues include H189 and E191.

As to quaternary structure, heterodimer of HisH and HisF.

It is found in the cytoplasm. It catalyses the reaction 5-[(5-phospho-1-deoxy-D-ribulos-1-ylimino)methylamino]-1-(5-phospho-beta-D-ribosyl)imidazole-4-carboxamide + L-glutamine = D-erythro-1-(imidazol-4-yl)glycerol 3-phosphate + 5-amino-1-(5-phospho-beta-D-ribosyl)imidazole-4-carboxamide + L-glutamate + H(+). It carries out the reaction L-glutamine + H2O = L-glutamate + NH4(+). The protein operates within amino-acid biosynthesis; L-histidine biosynthesis; L-histidine from 5-phospho-alpha-D-ribose 1-diphosphate: step 5/9. In terms of biological role, IGPS catalyzes the conversion of PRFAR and glutamine to IGP, AICAR and glutamate. The HisH subunit catalyzes the hydrolysis of glutamine to glutamate and ammonia as part of the synthesis of IGP and AICAR. The resulting ammonia molecule is channeled to the active site of HisF. The polypeptide is Imidazole glycerol phosphate synthase subunit HisH (Gloeobacter violaceus (strain ATCC 29082 / PCC 7421)).